The sequence spans 376 residues: Fibromodulin (376 aa).

The signal sequence occupies residues 1–18 (MQWASILLLAGLCSLSWA). Gln19 carries the post-translational modification Pyrrolidone carboxylic acid. Tyr20, Tyr38, Tyr45, Tyr47, Tyr50, Tyr53, Tyr55, Tyr63, and Tyr65 each carry sulfotyrosine. The 39-residue stretch at 67-105 (SPPQPEPRDCPQECDCPPNFPTAMYCDNRNLKYLPFVPS) folds into the LRRNT domain. 8 LRR repeats span residues 106 to 127 (RMKYVYFQNNQISSIQEGVFDN), 130 to 151 (GLLWIALHGNQITSDKVGKKVF), 156 to 176 (HLERLYLDHNNLTRIPSPLPR), 177 to 198 (SLRELHLDHNQISRVPNNALEG), 201 to 222 (NLTALYLHHNEIQEVGSSMKGL), 224 to 245 (SLILLDLSYNHLRKVPDGLPSA), 246 to 266 (LEQLYLEHNNVFSVPDSYFRG), and 269 to 289 (KLLYVRLSHNSLTNNGLASNT). Asn127 carries N-linked (GlcNAc...) (keratan sulfate) asparagine glycosylation. A glycan (N-linked (GlcNAc...) (keratan sulfate) asparagine) is linked at Asn166. The N-linked (GlcNAc...) (keratan sulfate) asparagine glycan is linked to Asn201. Asn291 carries an N-linked (GlcNAc...) (keratan sulfate) asparagine glycan. LRR repeat units lie at residues 294–315 (SLLELDLSYNQLQKIPPVSTNL) and 316–335 (ENLYLQGNRINEFSISSFCT). A disulfide bridge connects residues Cys334 and Cys367. The N-linked (GlcNAc...) asparagine glycan is linked to Asn341. An LRR 11 repeat occupies 344 to 365 (KLQVLRLDGNEIKRSAMPADAP).

This sequence belongs to the small leucine-rich proteoglycan (SLRP) family. SLRP class II subfamily. In terms of assembly, binds to type I and type II collagen. In terms of processing, binds keratan sulfate chains.

It localises to the secreted. It is found in the extracellular space. The protein resides in the extracellular matrix. In terms of biological role, affects the rate of fibrils formation. May have a primary role in collagen fibrillogenesis. This Bos taurus (Bovine) protein is Fibromodulin (FMOD).